Reading from the N-terminus, the 22-residue chain is Chlorophyllase type 1 (22 aa).

This sequence belongs to the AB hydrolase superfamily. Lipase family.

The catalysed reaction is a chlorophyll + H2O = a chlorophyllide + phytol + H(+). Its pathway is porphyrin-containing compound metabolism; chlorophyll degradation. Catalyzes the hydrolysis of ester bond in chlorophyll to yield chlorophyllide and phytol. This is Chlorophyllase type 1 from Chenopodium album (Fat hen).